The following is a 333-amino-acid chain: Ribosomal RNA small subunit methyltransferase C (333 aa).

Belongs to the methyltransferase superfamily. RsmC family. Monomer.

It localises to the cytoplasm. The catalysed reaction is guanosine(1207) in 16S rRNA + S-adenosyl-L-methionine = N(2)-methylguanosine(1207) in 16S rRNA + S-adenosyl-L-homocysteine + H(+). In terms of biological role, specifically methylates the guanine in position 1207 of 16S rRNA in the 30S particle. The polypeptide is Ribosomal RNA small subunit methyltransferase C (Chromohalobacter salexigens (strain ATCC BAA-138 / DSM 3043 / CIP 106854 / NCIMB 13768 / 1H11)).